The primary structure comprises 129 residues: Small ribosomal subunit protein uS11 (129 aa).

It belongs to the universal ribosomal protein uS11 family. As to quaternary structure, part of the 30S ribosomal subunit. Interacts with proteins S7 and S18. Binds to IF-3.

Located on the platform of the 30S subunit, it bridges several disparate RNA helices of the 16S rRNA. Forms part of the Shine-Dalgarno cleft in the 70S ribosome. This is Small ribosomal subunit protein uS11 from Pseudomonas entomophila (strain L48).